A 252-amino-acid polypeptide reads, in one-letter code: MNLKVLVCVKQTFDTEAKIELKDGKIADAGINLIINPYDEVAVEGAIQLKEKGVAKEIVVVAAGSDKAMDAIRTALAMGADRGILVQQDTAADEFARAVALAEAIKGENPDIILAGHVAADDGSSQVPTRVAEILGLPHVNVITAVEIAGGKATCTSEADGGTQVTEVSLPAVISSQVSWNEPRYPSMKGIMAAKKKPVATAAAAAAESKVKILEFSLPPAKAAGIKIEDEPEVCATKLAEWMKNTVKVEVK.

This sequence belongs to the ETF beta-subunit/FixA family. As to quaternary structure, heterodimer of an alpha and a beta subunit. It depends on AMP as a cofactor.

The protein resides in the cytoplasm. The protein operates within lipid metabolism; butanoate metabolism. Its function is as follows. Part of an electron transfer flavoprotein involved in syntrophic growth of S.wolfei with butyrate. Probably receives electrons from butyryl-CoA dehydrogenases, and transfers them to the membrane-bound quinone oxidoreductase Swol_0698. This Syntrophomonas wolfei subsp. wolfei (strain DSM 2245B / Goettingen) protein is Electron transfer flavoprotein subunit beta.